A 692-amino-acid chain; its full sequence is Ena/VASP-like protein (692 aa).

The WH1 domain occupies 1-112 (MSEQSICQAR…NAMLFALNIM (112 aa)). Disordered stretches follow at residues 116 to 310 (DGGP…VQKN), 466 to 518 (SAAM…YEES), and 531 to 650 (KLRK…NDVS). 2 stretches are compositionally biased toward polar residues: residues 123–132 (RQAQNIQNGP) and 159–169 (STTVSTLQINV). A compositionally biased stretch (low complexity) spans 214–226 (SSKSTNKSSNRTS). The segment covering 231-267 (LQNSHCGSEPSTSQSSAFSPIRPSNGTVSRSIKQISL) has biased composition (polar residues). Composition is skewed to low complexity over residues 288–310 (PSLS…VQKN) and 466–479 (SAAM…APAP). A compositionally biased stretch (pro residues) spans 480 to 506 (ASGPPPPPPPGPPPPSGGTPPPAPPLP). The interval 522-542 (GLAAALAGAKLRKVQRPEDGS) is EVH2 block A. Residues 522–689 (GLAAALAGAK…DAIRQELSRI (168 aa)) are EVH2. A KLKR motif is present at residues 531 to 534 (KLRK). Residues 563-580 (GGLMEEMNKLLAKRRKAA) form an EVH2 block B region. Polar residues predominate over residues 597-617 (EDASLSSSPVTRGPTPQNSSD). A compositionally biased stretch (basic and acidic residues) spans 618–628 (LGKKPWERSNS). Residues 655–689 (DFDRMKQEILEEVVRELHKVKEEIIDAIRQELSRI) form an EVH2 block C region.

The protein belongs to the Ena/VASP family. During embryonic and tadpole development, expressed in the cement gland, brain, neural tube, myotome and neural placodes, including the otic, lateral line and olfactory placodes. All isoforms show similar spatial expression patterns.

It localises to the cytoplasm. It is found in the cytoskeleton. Its subcellular location is the stress fiber. The protein resides in the cell projection. The protein localises to the lamellipodium. Ena/VASP proteins are actin-associated proteins involved in a range of processes dependent on cytoskeleton remodeling and cell polarity such as axon guidance and lamellipodial and filopodial dynamics in migrating cells. Evl enhances actin nucleation and polymerization. This is Ena/VASP-like protein from Xenopus laevis (African clawed frog).